Reading from the N-terminus, the 79-residue chain is Small ribosomal subunit protein bS16c (79 aa).

This sequence belongs to the bacterial ribosomal protein bS16 family.

The protein resides in the plastid. It is found in the chloroplast. This Thalassiosira pseudonana (Marine diatom) protein is Small ribosomal subunit protein bS16c.